The following is a 200-amino-acid chain: BmK-YA precursor (200 aa).

The signal sequence occupies residues 1–23; that stretch reads MIFHQFYSILILCLIFPNQVVQS. Residues 24 to 34 constitute a propeptide that is removed on maturation; it reads DKERQDWIPSD. The interval 30–200 is disordered; it reads WIPSDYGGYM…GYMNPAGRSD (171 aa). A42 is subject to Alanine amide. A propeptide spanning residues 45–100 is cleaved from the precursor; sequence SDEERQDWIPSDYGGHMNPAGRSDEERQDWIPSDYGGHMNPAGRSNEERQDWIPSD. A108 is subject to Alanine amide. The propeptide occupies 111-144; that stretch reads SDEERQDWIPSDYGGHMNPAGRSNEERQDWIPSD. A152 bears the Alanine amide mark. Positions 155–188 are excised as a propeptide; that stretch reads SDEERQDWIPSDYGGHMNPAGRSDEERQDWIPSD. Alanine amide is present on A196. Residues 199–200 constitute a propeptide that is removed on maturation; it reads SD.

In terms of tissue distribution, venom gland.

The protein localises to the secreted. Synthetic BmK-YA activates human opioid receptors in vitro, with highest activity on the delta-type/OPRD1 receptor (EC(50)=2.5 uM) and lower activity on mu-type/OPRM1 and kappa-type/OPRK1 receptors (EC(50)=17 uM and 30 uM, respectively). This chain is BmK-YA precursor, found in Olivierus martensii (Manchurian scorpion).